Reading from the N-terminus, the 206-residue chain is Small ribosomal subunit protein uS4 (206 aa).

The region spanning 96 to 158 is the S4 RNA-binding domain; the sequence is SRLDNVVYRM…AKKQLRIQNA (63 aa).

Belongs to the universal ribosomal protein uS4 family. Part of the 30S ribosomal subunit. Contacts protein S5. The interaction surface between S4 and S5 is involved in control of translational fidelity.

In terms of biological role, one of the primary rRNA binding proteins, it binds directly to 16S rRNA where it nucleates assembly of the body of the 30S subunit. Functionally, with S5 and S12 plays an important role in translational accuracy. The sequence is that of Small ribosomal subunit protein uS4 from Francisella tularensis subsp. tularensis (strain FSC 198).